We begin with the raw amino-acid sequence, 124 residues long: Large ribosomal subunit protein bL17 (124 aa).

The protein belongs to the bacterial ribosomal protein bL17 family. As to quaternary structure, part of the 50S ribosomal subunit. Contacts protein L32.

This is Large ribosomal subunit protein bL17 from Mycoplasma pneumoniae (strain ATCC 29342 / M129 / Subtype 1) (Mycoplasmoides pneumoniae).